A 712-amino-acid polypeptide reads, in one-letter code: Polyribonucleotide nucleotidyltransferase (712 aa).

2 residues coordinate Mg(2+): D484 and D490. A KH domain is found at 550–609 (PKYKTMDVNPEKIRVLIGPGGKNIKAIIEETGSDVEIQDSGVVNIFAPDTPTLDKTIKLI). The S1 motif domain occupies 619–686 (GEVYDGIVKD…KGGKYSLSRK (68 aa)).

This sequence belongs to the polyribonucleotide nucleotidyltransferase family. The cofactor is Mg(2+).

The protein resides in the cytoplasm. It carries out the reaction RNA(n+1) + phosphate = RNA(n) + a ribonucleoside 5'-diphosphate. Functionally, involved in mRNA degradation. Catalyzes the phosphorolysis of single-stranded polyribonucleotides processively in the 3'- to 5'-direction. In Brachyspira hyodysenteriae (strain ATCC 49526 / WA1), this protein is Polyribonucleotide nucleotidyltransferase.